The following is a 458-amino-acid chain: ATP synthase subunit beta (458 aa).

148-155 (GGAGVGKT) lines the ATP pocket.

This sequence belongs to the ATPase alpha/beta chains family. As to quaternary structure, F-type ATPases have 2 components, CF(1) - the catalytic core - and CF(0) - the membrane proton channel. CF(1) has five subunits: alpha(3), beta(3), gamma(1), delta(1), epsilon(1). CF(0) has three main subunits: a(1), b(2) and c(9-12). The alpha and beta chains form an alternating ring which encloses part of the gamma chain. CF(1) is attached to CF(0) by a central stalk formed by the gamma and epsilon chains, while a peripheral stalk is formed by the delta and b chains.

The protein resides in the cell inner membrane. The enzyme catalyses ATP + H2O + 4 H(+)(in) = ADP + phosphate + 5 H(+)(out). Its function is as follows. Produces ATP from ADP in the presence of a proton gradient across the membrane. The catalytic sites are hosted primarily by the beta subunits. The chain is ATP synthase subunit beta from Pseudomonas putida (strain GB-1).